Reading from the N-terminus, the 463-residue chain is ATP-dependent protease ATPase subunit HslU (463 aa).

Residues I19, 61 to 66 (GVGKTE), D277, E341, and R413 each bind ATP.

This sequence belongs to the ClpX chaperone family. HslU subfamily. As to quaternary structure, a double ring-shaped homohexamer of HslV is capped on each side by a ring-shaped HslU homohexamer. The assembly of the HslU/HslV complex is dependent on binding of ATP.

It is found in the cytoplasm. Its function is as follows. ATPase subunit of a proteasome-like degradation complex; this subunit has chaperone activity. The binding of ATP and its subsequent hydrolysis by HslU are essential for unfolding of protein substrates subsequently hydrolyzed by HslV. HslU recognizes the N-terminal part of its protein substrates and unfolds these before they are guided to HslV for hydrolysis. This is ATP-dependent protease ATPase subunit HslU from Bacillus cereus (strain ATCC 14579 / DSM 31 / CCUG 7414 / JCM 2152 / NBRC 15305 / NCIMB 9373 / NCTC 2599 / NRRL B-3711).